The sequence spans 70 residues: Conotoxin Vc6.10 (70 aa).

Residues 1–19 (MEKLTILLLVAAVLTSTQA) form the signal peptide. A propeptide spanning residues 20 to 40 (LIQGGADERQKAKINFLSRSD) is cleaved from the precursor. Intrachain disulfides connect Cys-43-Cys-57, Cys-50-Cys-62, and Cys-56-Cys-69.

Belongs to the conotoxin O2 superfamily. In terms of tissue distribution, expressed by the venom duct.

The protein localises to the secreted. Functionally, inhibits voltage-gated ion channels. The protein is Conotoxin Vc6.10 of Conus victoriae (Queen Victoria cone).